The primary structure comprises 288 residues: Pyrroline-5-carboxylate reductase 3 (288 aa).

It belongs to the pyrroline-5-carboxylate reductase family. As to quaternary structure, homodecamer; composed of 5 homodimers.

It localises to the cytoplasm. It carries out the reaction L-proline + NADP(+) = (S)-1-pyrroline-5-carboxylate + NADPH + 2 H(+). It catalyses the reaction L-proline + NAD(+) = (S)-1-pyrroline-5-carboxylate + NADH + 2 H(+). Its pathway is amino-acid biosynthesis; L-proline biosynthesis; L-proline from L-glutamate 5-semialdehyde: step 1/1. In terms of biological role, oxidoreductase that catalyzes the last step in proline biosynthesis, which corresponds to the reduction of pyrroline-5-carboxylate (P5C) to L-proline using NAD(P)H. Proline is synthesized from either glutamate or ornithine; both are converted to P5C, and then to proline via pyrroline-5-carboxylate reductases (PYCRs). PYCR3 is exclusively linked to the biosynthesis of proline from ornithine. The polypeptide is Pyrroline-5-carboxylate reductase 3 (Danio rerio (Zebrafish)).